The chain runs to 399 residues: Formate-dependent phosphoribosylglycinamide formyltransferase (399 aa).

Residues 22-23 and E82 contribute to the N(1)-(5-phospho-beta-D-ribosyl)glycinamide site; that span reads EL. ATP contacts are provided by residues R115, K157, 162-167, 197-200, and E205; these read SSGKGQ and EAVV. One can recognise an ATP-grasp domain in the interval 120–315; it reads RLAAEELGLQ…EFELHARAIL (196 aa). Mg(2+)-binding residues include E274 and E286. Residues D293, K362, and 369–370 contribute to the N(1)-(5-phospho-beta-D-ribosyl)glycinamide site; that span reads RR.

This sequence belongs to the PurK/PurT family. As to quaternary structure, homodimer.

It carries out the reaction N(1)-(5-phospho-beta-D-ribosyl)glycinamide + formate + ATP = N(2)-formyl-N(1)-(5-phospho-beta-D-ribosyl)glycinamide + ADP + phosphate + H(+). It participates in purine metabolism; IMP biosynthesis via de novo pathway; N(2)-formyl-N(1)-(5-phospho-D-ribosyl)glycinamide from N(1)-(5-phospho-D-ribosyl)glycinamide (formate route): step 1/1. In terms of biological role, involved in the de novo purine biosynthesis. Catalyzes the transfer of formate to 5-phospho-ribosyl-glycinamide (GAR), producing 5-phospho-ribosyl-N-formylglycinamide (FGAR). Formate is provided by PurU via hydrolysis of 10-formyl-tetrahydrofolate. The sequence is that of Formate-dependent phosphoribosylglycinamide formyltransferase from Thioalkalivibrio sulfidiphilus (strain HL-EbGR7).